The following is a 69-amino-acid chain: Large ribosomal subunit protein uL29 (69 aa).

This sequence belongs to the universal ribosomal protein uL29 family.

The chain is Large ribosomal subunit protein uL29 from Parasynechococcus marenigrum (strain WH8102).